Here is a 132-residue protein sequence, read N- to C-terminus: Small ribosomal subunit protein eS12 (132 aa).

Belongs to the eukaryotic ribosomal protein eS12 family.

In Oreochromis niloticus (Nile tilapia), this protein is Small ribosomal subunit protein eS12 (rps12).